The primary structure comprises 246 residues: Nuclear transcription factor Y subunit C-2 (246 aa).

2 disordered regions span residues 1–35 (MDNQ…AVPH) and 205–246 (QQGA…PSSE). Positions 9–21 (AGQPAAAGAGAPV) are enriched in low complexity.

It belongs to the NFYC/HAP5 subunit family. In terms of assembly, heterotrimeric transcription factor composed of three components, NF-YA, NF-YB and NF-YC. NF-YB and NF-YC must interact and dimerize for NF-YA association and DNA binding. Interacts with NFYB8, NFYB10 and HD5/NFYB11.

It localises to the nucleus. Its subcellular location is the cytoplasm. Probable transcription factor involved in the regulation of flowering time under long day (LD) conditions. Functions as a repressor of flowering, independently of HD1 and GHD7. Controls flowering time by negatively regulating the expression of EHD1 and HD3A. Component of the NF-Y/HAP transcription factor complex. The sequence is that of Nuclear transcription factor Y subunit C-2 from Oryza sativa subsp. japonica (Rice).